The chain runs to 239 residues: tRNA (guanine-N(7)-)-methyltransferase (239 aa).

Positions 69, 94, 121, and 144 each coordinate S-adenosyl-L-methionine. Asp144 is an active-site residue. Lys148 is a binding site for substrate. The tract at residues 150-155 is interaction with RNA; that stretch reads RHNKRR. Residues Asp180 and 217 to 220 contribute to the substrate site; that span reads TKFE.

The protein belongs to the class I-like SAM-binding methyltransferase superfamily. TrmB family. Monomer.

It carries out the reaction guanosine(46) in tRNA + S-adenosyl-L-methionine = N(7)-methylguanosine(46) in tRNA + S-adenosyl-L-homocysteine. It functions in the pathway tRNA modification; N(7)-methylguanine-tRNA biosynthesis. Its function is as follows. Catalyzes the formation of N(7)-methylguanine at position 46 (m7G46) in tRNA. The polypeptide is tRNA (guanine-N(7)-)-methyltransferase (Salmonella paratyphi A (strain ATCC 9150 / SARB42)).